The primary structure comprises 192 residues: dCTP deaminase, dUMP-forming (192 aa).

DCTP-binding positions include 101 to 106 (KSSLGR), aspartate 119, 127 to 129 (TLE), glutamine 148, tyrosine 162, and glutamine 174. The Proton donor/acceptor role is filled by glutamate 129. The interval 171–192 (YQGQRGPTPSRSWQSWHTWPTR) is disordered.

Belongs to the dCTP deaminase family. As to quaternary structure, homotrimer.

The enzyme catalyses dCTP + 2 H2O = dUMP + NH4(+) + diphosphate. The protein operates within pyrimidine metabolism; dUMP biosynthesis; dUMP from dCTP: step 1/1. In terms of biological role, bifunctional enzyme that catalyzes both the deamination of dCTP to dUTP and the hydrolysis of dUTP to dUMP without releasing the toxic dUTP intermediate. In Salinispora arenicola (strain CNS-205), this protein is dCTP deaminase, dUMP-forming.